A 444-amino-acid chain; its full sequence is Phosphoglucosamine mutase (444 aa).

Serine 102 acts as the Phosphoserine intermediate in catalysis. Mg(2+) is bound by residues serine 102, aspartate 241, aspartate 243, and aspartate 245. Serine 102 carries the post-translational modification Phosphoserine.

This sequence belongs to the phosphohexose mutase family. It depends on Mg(2+) as a cofactor. In terms of processing, activated by phosphorylation.

The catalysed reaction is alpha-D-glucosamine 1-phosphate = D-glucosamine 6-phosphate. In terms of biological role, catalyzes the conversion of glucosamine-6-phosphate to glucosamine-1-phosphate. The sequence is that of Phosphoglucosamine mutase from Pasteurella multocida (strain Pm70).